The primary structure comprises 328 residues: Flotillin-like protein FloA (328 aa).

Transmembrane regions (helical) follow at residues 1–21 (MFGL…LVLF) and 26–46 (VGLW…TLVG).

The protein belongs to the flotillin-like FloA family. Homooligomerizes.

The protein resides in the cell membrane. The protein localises to the membrane raft. In terms of biological role, found in functional membrane microdomains (FMM) that may be equivalent to eukaryotic membrane rafts. FMMs are highly dynamic and increase in number as cells age. Flotillins are thought to be important factors in membrane fluidity. The chain is Flotillin-like protein FloA from Staphylococcus haemolyticus (strain JCSC1435).